The following is a 196-amino-acid chain: Glycerol-3-phosphate acyltransferase 2 (196 aa).

Transmembrane regions (helical) follow at residues 2–22 (GWWL…SYLI), 52–72 (VGGI…FITI), 80–100 (IVSL…FMKF), 112–132 (IIFC…LVIV), and 137–156 (YASL…GYLL).

This sequence belongs to the PlsY family. As to quaternary structure, probably interacts with PlsX.

Its subcellular location is the cell inner membrane. It carries out the reaction an acyl phosphate + sn-glycerol 3-phosphate = a 1-acyl-sn-glycero-3-phosphate + phosphate. Its pathway is lipid metabolism; phospholipid metabolism. Its function is as follows. Catalyzes the transfer of an acyl group from acyl-phosphate (acyl-PO(4)) to glycerol-3-phosphate (G3P) to form lysophosphatidic acid (LPA). This enzyme utilizes acyl-phosphate as fatty acyl donor, but not acyl-CoA or acyl-ACP. This is Glycerol-3-phosphate acyltransferase 2 from Thermotoga maritima (strain ATCC 43589 / DSM 3109 / JCM 10099 / NBRC 100826 / MSB8).